We begin with the raw amino-acid sequence, 209 residues long: Small ribosomal subunit protein uS4 (209 aa).

Residues 22-45 (RGRNPLLRKPNPPGQHGMQRKKKS) are disordered. The 62-residue stretch at 93–154 (CRLDSIVYRL…KSKRLAIVTE (62 aa)) folds into the S4 RNA-binding domain.

The protein belongs to the universal ribosomal protein uS4 family. In terms of assembly, part of the 30S ribosomal subunit. Contacts protein S5. The interaction surface between S4 and S5 is involved in control of translational fidelity.

Its function is as follows. One of the primary rRNA binding proteins, it binds directly to 16S rRNA where it nucleates assembly of the body of the 30S subunit. In terms of biological role, with S5 and S12 plays an important role in translational accuracy. This chain is Small ribosomal subunit protein uS4, found in Chlamydia trachomatis serovar L2 (strain ATCC VR-902B / DSM 19102 / 434/Bu).